The primary structure comprises 117 residues: UPF0342 protein LBUL_1430 (117 aa).

It belongs to the UPF0342 family.

The protein is UPF0342 protein LBUL_1430 of Lactobacillus delbrueckii subsp. bulgaricus (strain ATCC BAA-365 / Lb-18).